Here is a 247-residue protein sequence, read N- to C-terminus: Adenosylcobinamide-GDP ribazoletransferase (247 aa).

Helical transmembrane passes span 34-54 (IVMFPFIGLILGGVSGLIFIL), 59-79 (CGIPLAALFCILALALLTGGF), 113-133 (GGLALIFVLLAKILVVSELAL), 138-158 (MLAALAAACAAGRGSAVLLMY), and 187-207 (LAVIVATVLLPGMQGLAAMVV).

The protein belongs to the CobS family. The cofactor is Mg(2+).

Its subcellular location is the cell inner membrane. It catalyses the reaction alpha-ribazole + adenosylcob(III)inamide-GDP = adenosylcob(III)alamin + GMP + H(+). The enzyme catalyses alpha-ribazole 5'-phosphate + adenosylcob(III)inamide-GDP = adenosylcob(III)alamin 5'-phosphate + GMP + H(+). It participates in cofactor biosynthesis; adenosylcobalamin biosynthesis; adenosylcobalamin from cob(II)yrinate a,c-diamide: step 7/7. Functionally, joins adenosylcobinamide-GDP and alpha-ribazole to generate adenosylcobalamin (Ado-cobalamin). Also synthesizes adenosylcobalamin 5'-phosphate from adenosylcobinamide-GDP and alpha-ribazole 5'-phosphate. The sequence is that of Adenosylcobinamide-GDP ribazoletransferase from Salmonella dublin (strain CT_02021853).